Reading from the N-terminus, the 414-residue chain is FAD-dependent monooxygenase adaC (414 aa).

The FAD site is built by Glu-32, Ala-43, Arg-115, Asp-325, and Gly-338.

The protein belongs to the paxM FAD-dependent monooxygenase family. Requires FAD as cofactor.

It carries out the reaction 3-(2,4-dioxopentyl)-3,6,8,9-tetrahydroxy-1-oxo-1,2,3,4-tetrahydroanthracene-2-carboxyl-[ACP] + NADPH + O2 + H(+) = 3-(2,4-dioxopentyl)-2,3,6,8,9-pentahydroxy-1-oxo-1,2,3,4-tetrahydroanthracene-2-carboxyl-[ACP] + NADP(+) + H2O. It functions in the pathway secondary metabolite biosynthesis. Functionally, FAD-dependent monooxygenase; part of the gene cluster that mediates the biosynthesis of the linear tetracyclic TAN-1612 neuropeptide Y receptor antagonist. The decaketide backbone of TAN-1612 is synthesized by the non-reducing polyketide synthase adaA via condensation of one acetyl-CoA starter unit with 9 malonyl-CoA units. The FAD-dependent monooxygenase adaC then performs hydroxylation at C2 while the polaketide chain is still attached to the NRPKS adaA. The alpha-hydroxylation step at C2 appears to be crucial for the following C18-C1 Claisen cyclization and release of the C9-hydroxyl version of TAN-1612 from the NRPKS adaA, two steps performed by the lactamase-like protein adaB. Finally, the O-methyltransferase adaD performs the C9 O-methylation to complete the biosynthesis of TAN-1612. This chain is FAD-dependent monooxygenase adaC, found in Aspergillus niger.